Consider the following 104-residue polypeptide: MSEKINANQDNDRQITLVDDQGNEELFEILFTFTSEDYGKSYVLLYPAAVSDDDDVEVQAFSYDADEDGDVTSSDLHEISDDDEWNMVQGVLNTFLSDDRLSGE.

The protein belongs to the UPF0473 family.

In Lactobacillus gasseri (strain ATCC 33323 / DSM 20243 / BCRC 14619 / CIP 102991 / JCM 1131 / KCTC 3163 / NCIMB 11718 / NCTC 13722 / AM63), this protein is UPF0473 protein LGAS_0424.